An 80-amino-acid polypeptide reads, in one-letter code: Small ribosomal subunit protein bS18 (80 aa).

It belongs to the bacterial ribosomal protein bS18 family. As to quaternary structure, part of the 30S ribosomal subunit. Forms a tight heterodimer with protein bS6.

Its function is as follows. Binds as a heterodimer with protein bS6 to the central domain of the 16S rRNA, where it helps stabilize the platform of the 30S subunit. In Acholeplasma laidlawii (strain PG-8A), this protein is Small ribosomal subunit protein bS18.